A 243-amino-acid polypeptide reads, in one-letter code: Probable transcriptional regulatory protein LJ_0904 (243 aa).

The tract at residues 1 to 22 (MSGHSKWHNIQGRKNAQDAKRG) is disordered.

Belongs to the TACO1 family.

The protein localises to the cytoplasm. This chain is Probable transcriptional regulatory protein LJ_0904, found in Lactobacillus johnsonii (strain CNCM I-12250 / La1 / NCC 533).